A 527-amino-acid polypeptide reads, in one-letter code: Bifunctional purine biosynthesis protein PurH (527 aa).

In terms of domain architecture, MGS-like spans 9-156 (NAKRPIRRAL…KNHPSVAVVV (148 aa)).

This sequence belongs to the PurH family.

The enzyme catalyses (6R)-10-formyltetrahydrofolate + 5-amino-1-(5-phospho-beta-D-ribosyl)imidazole-4-carboxamide = 5-formamido-1-(5-phospho-D-ribosyl)imidazole-4-carboxamide + (6S)-5,6,7,8-tetrahydrofolate. It carries out the reaction IMP + H2O = 5-formamido-1-(5-phospho-D-ribosyl)imidazole-4-carboxamide. It participates in purine metabolism; IMP biosynthesis via de novo pathway; 5-formamido-1-(5-phospho-D-ribosyl)imidazole-4-carboxamide from 5-amino-1-(5-phospho-D-ribosyl)imidazole-4-carboxamide (10-formyl THF route): step 1/1. It functions in the pathway purine metabolism; IMP biosynthesis via de novo pathway; IMP from 5-formamido-1-(5-phospho-D-ribosyl)imidazole-4-carboxamide: step 1/1. The protein is Bifunctional purine biosynthesis protein PurH of Mycolicibacterium paratuberculosis (strain ATCC BAA-968 / K-10) (Mycobacterium paratuberculosis).